We begin with the raw amino-acid sequence, 356 residues long: Cyclin-A1-4 (356 aa).

This sequence belongs to the cyclin family. Cyclin AB subfamily.

The polypeptide is Cyclin-A1-4 (CYCA1-4) (Oryza sativa subsp. japonica (Rice)).